The primary structure comprises 316 residues: tRNA dimethylallyltransferase (316 aa).

ATP is bound at residue 17-24 (GPTASGKT). 19–24 (TASGKT) lines the substrate pocket. Interaction with substrate tRNA regions lie at residues 42–45 (DSAL), 166–170 (QRLSR), 247–252 (RCVGYR), and 280–287 (KRQITWLR).

It belongs to the IPP transferase family. As to quaternary structure, monomer. Mg(2+) is required as a cofactor.

It carries out the reaction adenosine(37) in tRNA + dimethylallyl diphosphate = N(6)-dimethylallyladenosine(37) in tRNA + diphosphate. In terms of biological role, catalyzes the transfer of a dimethylallyl group onto the adenine at position 37 in tRNAs that read codons beginning with uridine, leading to the formation of N6-(dimethylallyl)adenosine (i(6)A). This is tRNA dimethylallyltransferase from Shigella dysenteriae serotype 1 (strain Sd197).